The primary structure comprises 622 residues: uncharacterized protein (622 aa).

Positions 302, 306, 310, and 521 each coordinate [4Fe-4S] cluster.

Belongs to the AOR/FOR family. It depends on [4Fe-4S] cluster as a cofactor.

This is an uncharacterized protein from Methanocaldococcus jannaschii (strain ATCC 43067 / DSM 2661 / JAL-1 / JCM 10045 / NBRC 100440) (Methanococcus jannaschii).